The following is a 208-amino-acid chain: Outer-membrane lipoprotein LolB (208 aa).

The first 21 residues, 1–21, serve as a signal peptide directing secretion; the sequence is MLSSKRRLMRLLPLASLLLTA. C22 carries N-palmitoyl cysteine lipidation. Residue C22 is the site of S-diacylglycerol cysteine attachment.

The protein belongs to the LolB family. In terms of assembly, monomer.

It is found in the cell outer membrane. Functionally, plays a critical role in the incorporation of lipoproteins in the outer membrane after they are released by the LolA protein. The protein is Outer-membrane lipoprotein LolB of Erwinia tasmaniensis (strain DSM 17950 / CFBP 7177 / CIP 109463 / NCPPB 4357 / Et1/99).